Consider the following 498-residue polypeptide: COP9 signalosome complex subunit 1 (498 aa).

Residues Ser-249–Lys-430 form the PCI domain.

The protein belongs to the CSN1 family. Component of the COP9 signalosome (CSN) complex.

It localises to the cytoplasm. It is found in the nucleus. Component of the COP9 signalosome (CSN) complex that acts as an regulator of the ubiquitin (Ubl) conjugation pathway by mediating the deneddylation of the cullin subunit of SCF-type E3 ubiquitin-protein ligase complexes. The CSN complex seems to link protein degradation to sexual development. Required for fruit body formation. The chain is COP9 signalosome complex subunit 1 (csnA) from Emericella nidulans (strain FGSC A4 / ATCC 38163 / CBS 112.46 / NRRL 194 / M139) (Aspergillus nidulans).